The following is a 297-amino-acid chain: Bifunctional protein FolD (297 aa).

NADP(+) contacts are provided by residues 167–169 (GRS), Ser-192, and Ile-233.

It belongs to the tetrahydrofolate dehydrogenase/cyclohydrolase family. As to quaternary structure, homodimer.

It carries out the reaction (6R)-5,10-methylene-5,6,7,8-tetrahydrofolate + NADP(+) = (6R)-5,10-methenyltetrahydrofolate + NADPH. It catalyses the reaction (6R)-5,10-methenyltetrahydrofolate + H2O = (6R)-10-formyltetrahydrofolate + H(+). Its pathway is one-carbon metabolism; tetrahydrofolate interconversion. Its function is as follows. Catalyzes the oxidation of 5,10-methylenetetrahydrofolate to 5,10-methenyltetrahydrofolate and then the hydrolysis of 5,10-methenyltetrahydrofolate to 10-formyltetrahydrofolate. This is Bifunctional protein FolD from Caulobacter vibrioides (strain ATCC 19089 / CIP 103742 / CB 15) (Caulobacter crescentus).